The primary structure comprises 641 residues: Tetracycline resistance protein TetQ (641 aa).

In terms of domain architecture, tr-type G spans 1–244 (MNIINLGILA…AITSFILPPA (244 aa)). GTP is bound by residues 10–17 (AHIDAGKT), 74–78 (DTPGH), and 128–131 (NKID).

The protein belongs to the TRAFAC class translation factor GTPase superfamily. Classic translation factor GTPase family. TetM/TetO subfamily.

Abolishes the inhibitory effect of tetracyclin on protein synthesis by a non-covalent modification of the ribosomes. This is Tetracycline resistance protein TetQ (tetQ) from Xylanibacter ruminicola (Prevotella ruminicola).